We begin with the raw amino-acid sequence, 427 residues long: Cysteate synthase (427 aa).

Lys-104 bears the N6-(pyridoxal phosphate)lysine mark. Pyridoxal 5'-phosphate contacts are provided by Asn-130 and Thr-382.

This sequence belongs to the threonine synthase family. Cysteate synthase subfamily. As to quaternary structure, homotrimer. Pyridoxal 5'-phosphate serves as cofactor.

It carries out the reaction O-phospho-L-serine + sulfite + H(+) = L-cysteate + phosphate. It participates in cofactor biosynthesis; coenzyme M biosynthesis. Its function is as follows. Specifically catalyzes the beta-elimination of phosphate from L-phosphoserine and the beta-addition of sulfite to the dehydroalanine intermediate to produce L-cysteate. The polypeptide is Cysteate synthase (Methanocella paludicola (strain DSM 17711 / JCM 13418 / NBRC 101707 / SANAE)).